The primary structure comprises 217 residues: 2-C-methyl-D-erythritol 4-phosphate cytidylyltransferase (217 aa).

This sequence belongs to the IspD/TarI cytidylyltransferase family. IspD subfamily.

The catalysed reaction is 2-C-methyl-D-erythritol 4-phosphate + CTP + H(+) = 4-CDP-2-C-methyl-D-erythritol + diphosphate. The protein operates within isoprenoid biosynthesis; isopentenyl diphosphate biosynthesis via DXP pathway; isopentenyl diphosphate from 1-deoxy-D-xylulose 5-phosphate: step 2/6. Functionally, catalyzes the formation of 4-diphosphocytidyl-2-C-methyl-D-erythritol from CTP and 2-C-methyl-D-erythritol 4-phosphate (MEP). The polypeptide is 2-C-methyl-D-erythritol 4-phosphate cytidylyltransferase (Chlamydia abortus (strain DSM 27085 / S26/3) (Chlamydophila abortus)).